Reading from the N-terminus, the 1140-residue chain is Kinesin-like protein KIN-14O (1140 aa).

Positions 1–12 (MLESEFQREHAF) are enriched in basic and acidic residues. Disordered stretches follow at residues 1 to 37 (MLES…ADDD), 50 to 81 (NPAE…DEDS), 161 to 217 (SPGS…GGHK), and 323 to 347 (ASGT…KEED). Positions 161 to 179 (SPGSSHGGSTPRSPFSPSS) are enriched in low complexity. Basic and acidic residues predominate over residues 180 to 193 (PRERHNKGLADSRF). Polar residues predominate over residues 197-209 (LPNSSALDPSSPG). The stretch at 327–546 (SEENETEKSK…KAKEMEEKSE (220 aa)) forms a coiled coil. Over residues 332–347 (TEKSKLEEKKKDKEED) the composition is skewed to basic and acidic residues. The Kinesin motor domain maps to 632-952 (NIRVYCRVRP…LKFAERVSGV (321 aa)). 716–723 (GQTGSGKT) is a binding site for ATP. A compositionally biased stretch (polar residues) spans 1002–1018 (LGQSDDFNSEAGDSQLS). Disordered regions lie at residues 1002–1021 (LGQS…SIED) and 1028–1140 (DYTR…KRWS). Residues 1066–1078 (EGRKPLKISDKPK) show a composition bias toward basic and acidic residues. Residues 1099–1130 (TMRTTNIAKATSALLSPSSQGMKKTGSASNFL) show a composition bias toward polar residues.

It belongs to the TRAFAC class myosin-kinesin ATPase superfamily. Kinesin family. KIN-14 subfamily.

This chain is Kinesin-like protein KIN-14O, found in Arabidopsis thaliana (Mouse-ear cress).